The sequence spans 109 residues: Iron-sulfur cluster assembly protein CyaY (109 aa).

The protein belongs to the frataxin family.

Involved in iron-sulfur (Fe-S) cluster assembly. May act as a regulator of Fe-S biogenesis. In Bordetella petrii (strain ATCC BAA-461 / DSM 12804 / CCUG 43448), this protein is Iron-sulfur cluster assembly protein CyaY.